The primary structure comprises 77 residues: Large ribosomal subunit protein uL29 (77 aa).

It belongs to the universal ribosomal protein uL29 family.

This Mycobacterium bovis (strain ATCC BAA-935 / AF2122/97) protein is Large ribosomal subunit protein uL29 (rpmC).